Reading from the N-terminus, the 200-residue chain is Small ribosomal subunit protein uS5 (200 aa).

The span at 1–12 (MGRPRTSQTRGQ) shows a compositional bias: polar residues. Residues 1–49 (MGRPRTSQTRGQGPSGATGGNPRGGGSTTRERDARGARPGERDGGSEIQ) are disordered. Positions 13-27 (GPSGATGGNPRGGGS) are enriched in gly residues. Over residues 29–49 (TRERDARGARPGERDGGSEIQ) the composition is skewed to basic and acidic residues. An S5 DRBM domain is found at 48–111 (IQDRVVQIRR…EKARHAMFDV (64 aa)).

It belongs to the universal ribosomal protein uS5 family. As to quaternary structure, part of the 30S ribosomal subunit. Contacts proteins S4 and S8.

With S4 and S12 plays an important role in translational accuracy. In terms of biological role, located at the back of the 30S subunit body where it stabilizes the conformation of the head with respect to the body. The polypeptide is Small ribosomal subunit protein uS5 (Rubrobacter xylanophilus (strain DSM 9941 / JCM 11954 / NBRC 16129 / PRD-1)).